The sequence spans 452 residues: Gastrin/cholecystokinin type B receptor (452 aa).

The Extracellular portion of the chain corresponds to 1 to 57 (MELLKLNRSLPGPGPGAALCRPEGPLLNGSGAGNLSCEPPRIRGAGTRELELAVRIT). Asparagine 7, asparagine 28, and asparagine 34 each carry an N-linked (GlcNAc...) asparagine glycan. The helical transmembrane segment at 58-78 (LYAAIFLMSVAGNVLIIVVLG) threads the bilayer. Residues 79 to 99 (LSRRLRTVTNAFLLSLAVSDL) lie on the Cytoplasmic side of the membrane. A helical membrane pass occupies residues 100–120 (LLAVACMPFTLLPNLMGTFIF). Residues 121-127 (GTVVCKA) are Extracellular-facing. Cysteine 125 and cysteine 203 are disulfide-bonded. The chain crosses the membrane as a helical span at residues 128-148 (VSYFMGVSVSVSTLSLVAIAL). The Cytoplasmic segment spans residues 149–171 (ERYSAICRPLQARVWQTRSHAAR). The chain crosses the membrane as a helical span at residues 172–192 (VIVATWMLSGLLMVPYPVYTA). At 193-218 (VQPAGPRVLQCMHRWPSARIRQTWSV) the chain is on the extracellular side. A helical transmembrane segment spans residues 219–239 (LLLLLLFFVPGVVMAVAYGLI). Residues 240-339 (SRELYLGLRF…LLAKKRVVRM (100 aa)) are Cytoplasmic-facing. A disordered region spans residues 256 to 285 (ESQSQVGSQGGLPGGAGQGPAHPNGHCRSE). The segment covering 263–273 (SQGGLPGGAGQ) has biased composition (gly residues). Residues 340 to 360 (LLVIVVLFFLCWLPVYSANTW) form a helical membrane-spanning segment. Residues 361 to 376 (RAFDGPGAHRALSGAP) lie on the Extracellular side of the membrane. A helical transmembrane segment spans residues 377-397 (ISFIHLLSYASACVNPLVYCF). At 398–452 (MHRRFRQACLDTCARCCPRPPRARPRPLPDEDPPTPSIASLSRLSYTTISTLGPG) the chain is on the cytoplasmic side. Residue cysteine 413 is the site of S-palmitoyl cysteine attachment.

Belongs to the G-protein coupled receptor 1 family.

The protein localises to the cell membrane. In terms of biological role, receptor for gastrin and cholecystokinin. The CCK-B receptors occur throughout the central nervous system where they modulate anxiety, analgesia, arousal, and neuroleptic activity. This receptor mediates its action by association with G proteins that activate a phosphatidylinositol-calcium second messenger system. In Sus scrofa (Pig), this protein is Gastrin/cholecystokinin type B receptor.